A 266-amino-acid chain; its full sequence is Sec-independent protein translocase protein TatC (266 aa).

6 helical membrane-spanning segments follow: residues 28 to 48 (MIIA…YILF), 93 to 113 (FNIY…PYIF), 134 to 154 (GIIM…YFIL), 183 to 203 (LIMH…FIYF), 221 to 241 (HAFL…IFST), and 242 to 262 (IVVL…SFYV).

It belongs to the TatC family. In terms of assembly, forms a complex with TatA.

It localises to the cell inner membrane. Functionally, part of the twin-arginine translocation (Tat) system that transports large folded proteins containing a characteristic twin-arginine motif in their signal peptide across membranes. This chain is Sec-independent protein translocase protein TatC, found in Blattabacterium sp. subsp. Periplaneta americana (strain BPLAN) (Periplaneta americana symbiotic bacterium).